We begin with the raw amino-acid sequence, 1507 residues long: Nonribosomal peptide synthetase ataP (1507 aa).

One can recognise a Carrier 1 domain in the interval 1-72 (MQINIRNEIA…DIISRSTGMY (72 aa)). S33 is modified (O-(pantetheine 4'-phosphoryl)serine). The interval 98–119 (TPSPSPSGPSTGCPTPDTLDTT) is disordered. The span at 105–115 (GPSTGCPTPDT) shows a compositional bias: low complexity. The tract at residues 163 to 429 (TRMAWQQVLE…NRVFRQLVQL (267 aa)) is condensation 1. Residues 514 to 893 (AAAENPEACA…GRNDRQIKLR (380 aa)) form an adenylation region. The Carrier 2 domain occupies 988–1065 (NEMSPTEQRV…DLSQRIDKLQ (78 aa)). S1025 is modified (O-(pantetheine 4'-phosphoryl)serine). The interval 1099–1471 (TSNTSFTVSF…MTALRLLIKN (373 aa)) is condensation 2.

This sequence belongs to the NRP synthetase family.

The protein operates within mycotoxin biosynthesis. Functionally, nonribosomal peptide synthetase; part of the gene cluster that mediates the biosynthesis of acetylaranotin, a member of the epipolythiodioxopiperazine (ETP) class of toxins characterized by a disulfide-bridged cyclic dipeptide. The first step of acetylaranotin biosynthesis is performed by the NRPS ataP which produces diketopiperazine cyclo-L-Phe-L-Phe via the condensation of 2 phenylalanines (L-Phe). The ataC domain of ataTC then catalyzes the formation of bishydroxylation of cyclo-L-Phe-L-Phe. The glutathione S-transferase domain ataG in ataIMG further catalyzes the conjugation of two glutathiones to the bishydroxylated intermediate. Next, the dipeptidase ataJ removes the Glu residues. The following step is performed by the carbon sulfur lyase domain ataI of ataIMG which may convert the bis-cysteinyl adduct to yield an epidithiol intermediate. The ataT domain from ataTC then catalyzes the oxidation of the free dithiols, followed by a cyclization step catalyzed by the cytochrome P450 ataF. AtaF probably acts as an epoxidase to promote a dual epoxidation formation at C8 and C9 along with C8' and C9', followed by the spontaneous nucleophilic attack of the amide nitrogens N10 and N10' to yield an intermediate with the pyrrolidine partial structure. The final steps of acetylaranotin biosynthesis involve the acetylation and ring rearrangement of an epitetrathiodiketopiperazine intermediate to produce acetylaranotin. AtaH probably catalyzes the acetylation of epitetrathiodiketopiperazine to produce a diacetate and ataY is responsible for the formation of the dihydrooxepin moiety that converts the diacetate intermediate to acetylaranotin via acetylapoaranotin. Both enzymes could function independently in the absence of the other. The acetylaranotin bis-thiomethyltransferase ataS located outside of acetylaranotin gene cluster is the main thiomethyltransferase responsible for converting acetylaranotin and its related intermediates to their methylated forms. This chain is Nonribosomal peptide synthetase ataP, found in Aspergillus terreus (strain NIH 2624 / FGSC A1156).